A 497-amino-acid chain; its full sequence is Protein adenylyltransferase Fic (497 aa).

Positions 1 to 30 (MGATDQALEAESKTTEPPKTPPVPEQHDRP) are disordered. Residues 38 to 58 (LCHLLVLLFSGGLAAITLHIF) traverse the membrane as a helical segment. 2 TPR repeats span residues 123-156 (ALGALRLAQDMYLAGKDDKAARLFQHSLALAPRH) and 157-191 (PTVLLRYGEFLEHSQRNIVLADQYYFQALSISPSN). Residues 248 to 253 (TVGIEG) carry the Inhibitory (S/T)XXXE(G/N) motif motif. ATP-binding positions include glutamate 252 and 333-336 (VGGH). The 136-residue stretch at 302–437 (ITIKDILELH…IRPFVRFIAD (136 aa)) folds into the Fido domain. Residue histidine 380 is part of the active site. ATP contacts are provided by residues 384 to 391 (DGNGRTSR), 416 to 417 (YY), and asparagine 424. The segment at 468–497 (GEGVPQLQSSQMGGGASIPEFHESGSGSLP) is disordered.

The protein belongs to the fic family. In terms of assembly, homodimer.

It localises to the membrane. The enzyme catalyses L-tyrosyl-[protein] + ATP = O-(5'-adenylyl)-L-tyrosyl-[protein] + diphosphate. It carries out the reaction L-threonyl-[protein] + ATP = 3-O-(5'-adenylyl)-L-threonyl-[protein] + diphosphate. It catalyses the reaction 3-O-(5'-adenylyl)-L-threonyl-[protein] + H2O = L-threonyl-[protein] + AMP + H(+). Its activity is regulated as follows. The side chain of Glu-252 determines which of the two opposing activities (AMPylase or de-AMPylase) will take place. In response to endoplasmic reticulum stress, mediates de-AMPylase activity. Adenylyltransferase activity is inhibited by the inhibitory helix present at the N-terminus: Glu-252 binds ATP and competes with ATP-binding at Arg-391, thereby preventing adenylyltransferase activity. In unstressed cells, disengagement of Glu-252 promotes adenylyltransferase activity. Activation dissociates ATP-binding from Glu-252, allowing ordered binding of the entire ATP moiety with the alpha-phosphate in an orientation that is productive for accepting an incoming target hydroxyl side chain. Protein that can both mediate the addition of adenosine 5'-monophosphate (AMP) to specific residues of target proteins (AMPylation), and the removal of the same modification from target proteins (de-AMPylation), depending on the context. The side chain of Glu-252 determines which of the two opposing activities (AMPylase or de-AMPylase) will take place. Acts as a key regulator of the unfolded protein response (UPR) by mediating AMPylation or de-AMPylation of Hsc70-3/BiP. In unstressed cells, acts as an adenylyltransferase by mediating AMPylation of Hsc70-3/BiP at 'Thr-518', thereby inactivating it. In response to endoplasmic reticulum stress, acts as a phosphodiesterase by mediating removal of ATP (de-AMPylation) from Hsc70-3/BiP at 'Thr-518', leading to restore HSPA5/BiP activity. This chain is Protein adenylyltransferase Fic, found in Drosophila ananassae (Fruit fly).